A 395-amino-acid chain; its full sequence is Multidrug resistance protein MdtL (395 aa).

Over 1 to 3 (MKR) the chain is Cytoplasmic. A helical membrane pass occupies residues 4–24 (FLLCSFALVLLYPAGIDMYLV). Residues 25 to 41 (GLPRIAADLNASEAQLH) lie on the Periplasmic side of the membrane. Residues 42 to 62 (IAFSVYLAGMATAMLFAGKIA) form a helical membrane-spanning segment. Residues 63–68 (DQSGRK) lie on the Cytoplasmic side of the membrane. The helical transmembrane segment at 69–89 (PVAIVGAIVFMMASLLCSRAS) threads the bilayer. The Periplasmic segment spans residues 90 to 92 (EGS). Residues 93 to 113 (LFLSGRFLQGVGAGGCYVVAF) form a helical membrane-spanning segment. At 114-130 (AILRDTLDEHRRAKVLS) the chain is on the cytoplasmic side. The helical transmembrane segment at 131 to 151 (LLNGITCIVPVLAPVMGHLIM) threads the bilayer. Topologically, residues 152-157 (LRFPWQ) are periplasmic. The chain crosses the membrane as a helical span at residues 158 to 178 (SLFYTMSTMGIMVGLLSLFIL). The Cytoplasmic portion of the chain corresponds to 179-216 (RETRPARLAPRDLSPSSSAAESLVNRFFVSRLAITTLS). A helical transmembrane segment spans residues 217–237 (VSVILTFVNASPVLLMEVMGF). At 238-246 (SRGDYAITM) the chain is on the periplasmic side. The helical transmembrane segment at 247–267 (ALTAGVSMVVSFSTPFALGLF) threads the bilayer. Over 268–270 (KPR) the chain is Cytoplasmic. A helical transmembrane segment spans residues 271–291 (TLMLVSQGLFLTAGVTLSLAH). Residues 292–294 (TNT) are Periplasmic-facing. The helical transmembrane segment at 295–315 (VTLFGLTLICAGFSVGFGVAM) threads the bilayer. Residues 316 to 332 (SQALGPFSLRAGVASST) are Cytoplasmic-facing. The helical transmembrane segment at 333 to 353 (LGIAQVCGSSLWIWLAAILGI) threads the bilayer. The Periplasmic portion of the chain corresponds to 354 to 357 (SAMN). Residues 358 to 378 (MLIGILIGCSIVSILLIFSVA) form a helical membrane-spanning segment. At 379-395 (PNRSVAEHEEIPYQSRS) the chain is on the cytoplasmic side.

It belongs to the major facilitator superfamily. DHA1 family. MdtL (TC 2.A.1.2.22) subfamily.

The protein resides in the cell inner membrane. This chain is Multidrug resistance protein MdtL (mdtL), found in Salmonella typhi.